The primary structure comprises 278 residues: Large ribosomal subunit protein uL2 (278 aa).

Disordered stretches follow at residues 33–57 (LIRPLHGTGGRNAHGRITTRHKGGG) and 224–278 (VVMN…GKKR). Over residues 45 to 57 (AHGRITTRHKGGG) the composition is skewed to basic residues. Positions 253-268 (PEGRTRKPNKASDKLI) are enriched in basic and acidic residues. A compositionally biased stretch (basic residues) spans 269-278 (VRRRRTGKKR).

The protein belongs to the universal ribosomal protein uL2 family. Part of the 50S ribosomal subunit. Forms a bridge to the 30S subunit in the 70S ribosome.

Functionally, one of the primary rRNA binding proteins. Required for association of the 30S and 50S subunits to form the 70S ribosome, for tRNA binding and peptide bond formation. It has been suggested to have peptidyltransferase activity; this is somewhat controversial. Makes several contacts with the 16S rRNA in the 70S ribosome. This chain is Large ribosomal subunit protein uL2, found in Mycobacteroides abscessus (strain ATCC 19977 / DSM 44196 / CCUG 20993 / CIP 104536 / JCM 13569 / NCTC 13031 / TMC 1543 / L948) (Mycobacterium abscessus).